The sequence spans 218 residues: Ribose-5-phosphate isomerase A (218 aa).

Substrate is bound by residues 28 to 31 (TGST), 81 to 84 (DGAD), and 94 to 97 (KGGG). Glu-103 acts as the Proton acceptor in catalysis. A substrate-binding site is contributed by Lys-121.

This sequence belongs to the ribose 5-phosphate isomerase family. In terms of assembly, homodimer.

It catalyses the reaction aldehydo-D-ribose 5-phosphate = D-ribulose 5-phosphate. Its pathway is carbohydrate degradation; pentose phosphate pathway; D-ribose 5-phosphate from D-ribulose 5-phosphate (non-oxidative stage): step 1/1. Its function is as follows. Catalyzes the reversible conversion of ribose-5-phosphate to ribulose 5-phosphate. This is Ribose-5-phosphate isomerase A from Vibrio cholerae serotype O1 (strain ATCC 39541 / Classical Ogawa 395 / O395).